The following is a 107-amino-acid chain: QNINWDLRTASVFCATWDADKPLSWRSKYGWTAFCGPVGPTGQDSCGKCLLVTNTGTGAKVTVRIVDQCSNGGLDLDVNVFNQIDTNGQGNAQGHLIVNYDFVDCGD.

The region spanning 1–107 (QNINWDLRTA…VNYDFVDCGD (107 aa)) is the Barwin domain. 3 cysteine pairs are disulfide-bonded: Cys-14–Cys-46, Cys-35–Cys-69, and Cys-49–Cys-105.

In terms of tissue distribution, preferentially expressed in the tissue surrounding the abscission zone of fruitlets.

It is found in the secreted. Its subcellular location is the cell wall. May be involved in protecting plant tissues from pathogen infection. The sequence is that of Pathogenesis-related protein PR-4 from Prunus persica (Peach).